A 227-amino-acid chain; its full sequence is Small ribosomal subunit protein uS7 (227 aa).

Acidic residues-rich tracts occupy residues Met1–Asp12 and Asn20–Ser31. The interval Met1–Ala43 is disordered. The segment covering Ala32–Ala43 has biased composition (low complexity).

The protein belongs to the universal ribosomal protein uS7 family. Part of the 30S ribosomal subunit.

Its function is as follows. One of the primary rRNA binding proteins, it binds directly to 16S rRNA where it nucleates assembly of the head domain of the 30S subunit. Is located at the subunit interface close to the decoding center. The protein is Small ribosomal subunit protein uS7 of Haloquadratum walsbyi (strain DSM 16790 / HBSQ001).